The primary structure comprises 583 residues: CTP synthase (583 aa).

The segment at 1–278 is amidoligase domain; that stretch reads MRKHPQTATK…DAYVVRRLNL (278 aa). Ser20 contacts CTP. Ser20 contributes to the UTP binding site. ATP is bound by residues 21-26 and Asp78; that span reads SLGKGL. Asp78 and Glu152 together coordinate Mg(2+). Residues 159–161, 199–204, and Lys235 each bind CTP; these read DIE and KTKPTQ. UTP-binding positions include 199-204 and Lys235; that span reads KTKPTQ. Residues 303–551 enclose the Glutamine amidotransferase type-1 domain; that stretch reads RIALVGKYVE…VGAAMDYKAG (249 aa). Gly366 is a binding site for L-glutamine. Cys393 acts as the Nucleophile; for glutamine hydrolysis in catalysis. L-glutamine is bound by residues 394-397, Glu416, and Arg477; that span reads LGLQ. Active-site residues include His524 and Glu526. Positions 560–583 are disordered; it reads EQSSNGIQHRDSAARPIPEPAARG.

It belongs to the CTP synthase family. Homotetramer.

The enzyme catalyses UTP + L-glutamine + ATP + H2O = CTP + L-glutamate + ADP + phosphate + 2 H(+). The catalysed reaction is L-glutamine + H2O = L-glutamate + NH4(+). It carries out the reaction UTP + NH4(+) + ATP = CTP + ADP + phosphate + 2 H(+). The protein operates within pyrimidine metabolism; CTP biosynthesis via de novo pathway; CTP from UDP: step 2/2. With respect to regulation, allosterically activated by GTP, when glutamine is the substrate; GTP has no effect on the reaction when ammonia is the substrate. The allosteric effector GTP functions by stabilizing the protein conformation that binds the tetrahedral intermediate(s) formed during glutamine hydrolysis. Inhibited by the product CTP, via allosteric rather than competitive inhibition. In terms of biological role, catalyzes the ATP-dependent amination of UTP to CTP with either L-glutamine or ammonia as the source of nitrogen. Regulates intracellular CTP levels through interactions with the four ribonucleotide triphosphates. The polypeptide is CTP synthase (Mycolicibacterium paratuberculosis (strain ATCC BAA-968 / K-10) (Mycobacterium paratuberculosis)).